A 471-amino-acid polypeptide reads, in one-letter code: MNAAGGGSGSQAAGAAGVNSSLSHNALLSTASGATTMPMAQLADGWLELESDPGLFTLLLKDFGCHDVQVEEVYDLQKPIESPYGFIFLFRWIEERRARRKIVETTAEIFVKDEEAISSIFFAQQVVPNSCATHALLSVLLNCNENNLQLGDTLSRLKAHTKGMSPENKGLAIGNTPELACAHNSHAMPQARRRLERTGAGVSSCRFTGEAFHFVSFVPINGQLFELDGLKPYPMNHGGWEDSEDWTDKFRRVMAERLGIATGEQDIRFNLMAVVPDRRIAITHKLKMLRTNQAIVSGTLQKLLKADEQGESGNGDSQRPDTPTTLLEPSAFTARDLQSLLKNLDTEIAINEQHLADENDRRHMFKVDASRRTHNYDKFICTFLSMLAHQGVLGELVSQHLLPSKKVSGQGAANRISKQSTTASAGGSTTGATASTPKTQQQQAAAAKNGKSPSKTPGRRRKGRNKCRKRK.

The region spanning 45–276 is the UCH catalytic domain; that stretch reads GWLELESDPG…IRFNLMAVVP (232 aa). The Nucleophile role is filled by Cys-131. His-213 acts as the Proton donor in catalysis. In terms of domain architecture, ULD spans 375–403; it reads NYDKFICTFLSMLAHQGVLGELVSQHLLP. Residues 405 to 471 are positively charged C-terminal tail required for binding nucleosomes; the sequence is KKVSGQGAAN…KGRNKCRKRK (67 aa). The segment at 410–471 is disordered; the sequence is QGAANRISKQ…KGRNKCRKRK (62 aa). The segment covering 420 to 447 has biased composition (low complexity); it reads STTASAGGSTTGATASTPKTQQQQAAAA. A compositionally biased stretch (basic residues) spans 457 to 471; that stretch reads PGRRRKGRNKCRKRK.

This sequence belongs to the peptidase C12 family. BAP1 subfamily. In terms of assembly, catalytic component of the polycomb repressive deubiquitinase (PR-DUB) complex, at least composed of caly/calypso, Asx and sba (MBD5/6 homolog). The PR-DUB complex associates with nucleosomes to mediate deubiquitination of histone H2AK118ub1 substrates; the association requires the positively charged C-terminal tail of caly, probably due to direct binding of DNA. Interacts (via ULD domain) with Asx (via DEUBAD domain); the interaction produces a stable heterodimer with a composite binding site for ubiquitin. Homodimerizes (via coiled-coil hinge-region between the UCH and ULD domains) to mediate assembly of 2 copies of the caly-Asx heterodimer into a bisymmetric tetramer; dimerization enhances PR-DUB association with nucleosomes.

It localises to the nucleus. The catalysed reaction is Thiol-dependent hydrolysis of ester, thioester, amide, peptide and isopeptide bonds formed by the C-terminal Gly of ubiquitin (a 76-residue protein attached to proteins as an intracellular targeting signal).. Catalytic component of the polycomb repressive deubiquitinase (PR-DUB) complex, a complex that specifically mediates deubiquitination of histone H2A monoubiquitinated at 'Lys-119' (H2AK118ub1). Mediates bisymmetric organization of the PR-DUB complex and is involved in association with nucleosomes to mediate deubiquitination. Does not deubiquitinate monoubiquitinated histone H2B. Required to maintain the transcriptionally repressive state of homeotic genes throughout development. The PR-DUB complex has weak or no activity toward 'Lys-48'- and 'Lys-63'-linked polyubiquitin chains. Polycomb group (PcG) protein. The chain is Ubiquitin carboxyl-terminal hydrolase calypso from Drosophila yakuba (Fruit fly).